The following is a 124-amino-acid chain: Small ribosomal subunit protein uS13 (124 aa).

A disordered region spans residues 95 to 124; that stretch reads GLPVRGQRTKTNARTRKGPKRTIAGKKKAR.

This sequence belongs to the universal ribosomal protein uS13 family. As to quaternary structure, part of the 30S ribosomal subunit. Forms a loose heterodimer with protein S19. Forms two bridges to the 50S subunit in the 70S ribosome.

Located at the top of the head of the 30S subunit, it contacts several helices of the 16S rRNA. In the 70S ribosome it contacts the 23S rRNA (bridge B1a) and protein L5 of the 50S subunit (bridge B1b), connecting the 2 subunits; these bridges are implicated in subunit movement. Contacts the tRNAs in the A and P-sites. The polypeptide is Small ribosomal subunit protein uS13 (Mycolicibacterium smegmatis (strain ATCC 700084 / mc(2)155) (Mycobacterium smegmatis)).